A 342-amino-acid chain; its full sequence is Farnesyl pyrophosphate synthase 2 (342 aa).

Isopentenyl diphosphate contacts are provided by Lys-47, Arg-50, and Gln-86. Asp-93 and Asp-97 together coordinate Mg(2+). Arg-102 is a dimethylallyl diphosphate binding site. Arg-103 lines the isopentenyl diphosphate pocket. The dimethylallyl diphosphate site is built by Lys-190, Thr-191, Gln-229, Lys-246, and Lys-255.

It belongs to the FPP/GGPP synthase family. Requires Mg(2+) as cofactor.

Its subcellular location is the cytoplasm. The enzyme catalyses isopentenyl diphosphate + dimethylallyl diphosphate = (2E)-geranyl diphosphate + diphosphate. It carries out the reaction isopentenyl diphosphate + (2E)-geranyl diphosphate = (2E,6E)-farnesyl diphosphate + diphosphate. Its pathway is isoprenoid biosynthesis; farnesyl diphosphate biosynthesis; farnesyl diphosphate from geranyl diphosphate and isopentenyl diphosphate: step 1/1. The protein operates within isoprenoid biosynthesis; geranyl diphosphate biosynthesis; geranyl diphosphate from dimethylallyl diphosphate and isopentenyl diphosphate: step 1/1. Functionally, catalyzes the sequential condensation of isopentenyl pyrophosphate with the allylic pyrophosphates, dimethylallyl pyrophosphate, and then with the resultant geranylpyrophosphate to the ultimate product farnesyl pyrophosphate. This Lupinus albus (White lupine) protein is Farnesyl pyrophosphate synthase 2 (FPS2).